Consider the following 474-residue polypeptide: Trigger factor (474 aa).

Residues 171-258 (GDVAVIDFQG…LKELKTRDLP (88 aa)) enclose the PPIase FKBP-type domain. Positions 441–474 (TEVDAASATVETTATETAEEAPEAPKAKKGKKKA) are disordered. Over residues 444–456 (DAASATVETTATE) the composition is skewed to low complexity.

The protein belongs to the FKBP-type PPIase family. Tig subfamily.

Its subcellular location is the cytoplasm. It catalyses the reaction [protein]-peptidylproline (omega=180) = [protein]-peptidylproline (omega=0). Its function is as follows. Involved in protein export. Acts as a chaperone by maintaining the newly synthesized protein in an open conformation. Functions as a peptidyl-prolyl cis-trans isomerase. The protein is Trigger factor of Synechococcus elongatus (strain ATCC 33912 / PCC 7942 / FACHB-805) (Anacystis nidulans R2).